Consider the following 453-residue polypeptide: Pup--protein ligase (453 aa).

Glu9 lines the Mg(2+) pocket. ATP is bound at residue Arg53. Tyr55 lines the Mg(2+) pocket. The Proton acceptor role is filled by Asp57. Glu63 contributes to the Mg(2+) binding site. Residues Thr66 and Trp420 each contribute to the ATP site.

This sequence belongs to the Pup ligase/Pup deamidase family. Pup-conjugating enzyme subfamily.

It carries out the reaction ATP + [prokaryotic ubiquitin-like protein]-L-glutamate + [protein]-L-lysine = ADP + phosphate + N(6)-([prokaryotic ubiquitin-like protein]-gamma-L-glutamyl)-[protein]-L-lysine.. Its pathway is protein degradation; proteasomal Pup-dependent pathway. It participates in protein modification; protein pupylation. Functionally, catalyzes the covalent attachment of the prokaryotic ubiquitin-like protein modifier Pup to the proteasomal substrate proteins, thereby targeting them for proteasomal degradation. This tagging system is termed pupylation. The ligation reaction involves the side-chain carboxylate of the C-terminal glutamate of Pup and the side-chain amino group of a substrate lysine. In Kineococcus radiotolerans (strain ATCC BAA-149 / DSM 14245 / SRS30216), this protein is Pup--protein ligase.